The chain runs to 147 residues: UPF0306 protein KPK_0562 (147 aa).

The protein belongs to the UPF0306 family.

This is UPF0306 protein KPK_0562 from Klebsiella pneumoniae (strain 342).